The following is a 289-amino-acid chain: MHAHPDDEVIATGATMAHYAADRDTRVVLVTCTLGEMGEVLIPELINLRADHADQLGGYRIGELERACAALGVTDHRFLGGAGRWRDSGMMSSPSNADPRSFWRADLTAASEALVRIVREVRPQVMVTYDAIGDYGHPDHIRAHDVTVRAFDDAADPDFAPQAGEPWQVSKLYETALSRAAVDAAVDQLWRSDLAKTAPEGISMPSDMLLSVPDAKVTTRIEAPDFFAAKVEAMRAHRTQMTVDGFFFALVNGDGQAARATEHYVLARGTPGPPAASGKEDDLFAGLVP.

His-4, Asp-7, and His-140 together coordinate Zn(2+).

Belongs to the MshB deacetylase family. The cofactor is Zn(2+).

The catalysed reaction is 1D-myo-inositol 2-acetamido-2-deoxy-alpha-D-glucopyranoside + H2O = 1D-myo-inositol 2-amino-2-deoxy-alpha-D-glucopyranoside + acetate. In terms of biological role, catalyzes the deacetylation of 1D-myo-inositol 2-acetamido-2-deoxy-alpha-D-glucopyranoside (GlcNAc-Ins) in the mycothiol biosynthesis pathway. This is 1D-myo-inositol 2-acetamido-2-deoxy-alpha-D-glucopyranoside deacetylase 1 from Frankia alni (strain DSM 45986 / CECT 9034 / ACN14a).